The following is a 120-amino-acid chain: NAD(P)H-quinone oxidoreductase subunit 3 (120 aa).

The next 3 helical transmembrane spans lie at 1–21 (MFVLSGYEYLLGFLIICSLVP), 64–84 (MFALVFVVFDVETVFLYPWAV), and 89–109 (LGLLAFIEALIFIAILVVALV).

This sequence belongs to the complex I subunit 3 family. NDH-1 can be composed of about 15 different subunits; different subcomplexes with different compositions have been identified which probably have different functions.

The protein resides in the cellular thylakoid membrane. It carries out the reaction a plastoquinone + NADH + (n+1) H(+)(in) = a plastoquinol + NAD(+) + n H(+)(out). It catalyses the reaction a plastoquinone + NADPH + (n+1) H(+)(in) = a plastoquinol + NADP(+) + n H(+)(out). NDH-1 shuttles electrons from an unknown electron donor, via FMN and iron-sulfur (Fe-S) centers, to quinones in the respiratory and/or the photosynthetic chain. The immediate electron acceptor for the enzyme in this species is believed to be plastoquinone. Couples the redox reaction to proton translocation, and thus conserves the redox energy in a proton gradient. Cyanobacterial NDH-1 also plays a role in inorganic carbon-concentration. This Trichormus variabilis (strain ATCC 29413 / PCC 7937) (Anabaena variabilis) protein is NAD(P)H-quinone oxidoreductase subunit 3.